A 276-amino-acid polypeptide reads, in one-letter code: Protein HemX (276 aa).

Transmembrane regions (helical) follow at residues 9–29 (LNEG…IDFL), 40–60 (FWLL…FMWV), 66–86 (VLNV…LSLV), 93–113 (VDFI…IHTF), 132–152 (LVIH…SFVF), 187–207 (VLNV…VIWA), 217–237 (FDAK…YLYI), and 247–267 (VAAL…FLLG).

This sequence to M.leprae U1620K.

The protein resides in the cell membrane. Its function is as follows. Required for HemL synthesis. In Bacillus subtilis (strain 168), this protein is Protein HemX (hemX).